The primary structure comprises 1342 residues: MVYSYTEKKRIRKDFGKRPQVLDVPYLLSIQLDSFQKFIEQDPDGQNGLEAAFRSVFPIQSYSGNAELQYVSYRLGEPVFDVKECQIRGVTYSAPLRVKLRLVIYEREAPEGTVKDIKEQEVYMGEIPLMTDNGTFVINGTERVIVSQLHRSPGVFFDSDKGKTHSSGKVLYNARIIPYRGSWLDFEFDPKDNLFVRIDRRRKLPATIILRAMNYSTEDILNLFFEKTTFEISNNKLMMTLVPERLRGETASFDIEANGKVYVEKGRRITARHIRQLEKEQIERIEVPVEYIAGKVVARDYIDEATGELICAANMEISLDVLARLSQAGHKTIETLFTNDLDHGAYISETIRVDPTNDRLSALVEIYRMMRPGEPPTREAAENLFENLFFSEDRYDLSAVGRMKFNRSLGREEVEGSGILSQEDIIEVMKKLIDIRNGKGEVDDIDHLGNRRIRSVGEMAENQFRVGLVRVERAVKERLSLGDLDALMPQDMINAKPISAAVKEFFGSSQLSQFMDQNNPLSEITHKRRISALGPGGLTRERAGFEVRDVHPTHYGRVCPIETPEGPNIGLINSLSVYAQTNEYGFLETPYRVVENNAVTDEIHYLSAIEEGNFIIAQANSVLDDDGHFVEELVTCRHKGESSLFSRDQVQYMDVSTQQVVSVGASLIPFLEHDDANRALMGANMQRQAVPTLRGDKPLVGTGMERAVAVDSGVTAVAKRGGTVQYVDASRIVIKVNEDETYAGEAGIDIYSLTKYTRSNQNTCINQTPCVSLGEPVERGDVLADGPSTDLGELALGQNMRVAFMPWNGYNYEDSILVSERVVQEDRFTTIHIQELACVSRDTKLGPEEITADIPNVGEAALSKLDESGIVYIGAEVKGGDILVGKVTPKGETQLTPEEKLLRAIFGEKASDVKDSSLRVPNGVSGTVIDVQVFTRDGVEKDKRALEIEESQLREVKKDLTEELRIFEAGLFARIRGVLIAGGIEADKLDKLPRERWLELGLADEEKQNQLEQLAEQYDELKAEFAKKLEAKRRKITQGDDLAPGVLKIVKVYLAVKRQIQPGDKMAGRHGNKGVISKINPIEDMPYDENGNPVDLVLNPLGVPSRMNIGQILETHLGMAAKGIGDKINAMLKQQQEVAKLREFIQKAYDLGMAPRQKVDLDTFSDEEVLRLAENLKKGMPTATPVFDGAEEMEIKEMLKLADLPTSGQITLFDGRTGEQFERPVTVGYMYMLKLNHLVDDKMHARSTGSYSLVTQQPLGGKAQFGGQRFGEMEVWALEAYGAAYTLQEMLTVKSDDVNGRTKMYKNIVDGNHQMEPGMPESFNVLLKEIRSLGINIELEDE.

This sequence belongs to the RNA polymerase beta chain family. As to quaternary structure, the RNAP catalytic core consists of 2 alpha, 1 beta, 1 beta' and 1 omega subunit. When a sigma factor is associated with the core the holoenzyme is formed, which can initiate transcription.

It carries out the reaction RNA(n) + a ribonucleoside 5'-triphosphate = RNA(n+1) + diphosphate. DNA-dependent RNA polymerase catalyzes the transcription of DNA into RNA using the four ribonucleoside triphosphates as substrates. This chain is DNA-directed RNA polymerase subunit beta, found in Proteus mirabilis (strain HI4320).